The chain runs to 265 residues: Energy-coupling factor transporter transmembrane protein EcfT (265 aa).

Transmembrane regions (helical) follow at residues I29–I49, V73–V93, A110–T130, L143–I163, and F242–W262.

Belongs to the energy-coupling factor EcfT family. Forms a stable energy-coupling factor (ECF) transporter complex composed of 2 membrane-embedded substrate-binding proteins (S component), 2 ATP-binding proteins (A component) and 2 transmembrane proteins (T component). May be able to interact with more than 1 S component at a time.

The protein resides in the cell membrane. Transmembrane (T) component of an energy-coupling factor (ECF) ABC-transporter complex. Unlike classic ABC transporters this ECF transporter provides the energy necessary to transport a number of different substrates. In Brevibacillus brevis (strain 47 / JCM 6285 / NBRC 100599), this protein is Energy-coupling factor transporter transmembrane protein EcfT.